A 258-amino-acid chain; its full sequence is L-aspartate dehydrogenase 1 (258 aa).

The NAD(+) site is built by Ala121 and Asn181. His211 is a catalytic residue.

This sequence belongs to the L-aspartate dehydrogenase family.

The enzyme catalyses L-aspartate + NADP(+) + H2O = oxaloacetate + NH4(+) + NADPH + H(+). The catalysed reaction is L-aspartate + NAD(+) + H2O = oxaloacetate + NH4(+) + NADH + H(+). Its pathway is cofactor biosynthesis; NAD(+) biosynthesis; iminoaspartate from L-aspartate (dehydrogenase route): step 1/1. Its function is as follows. Specifically catalyzes the NAD or NADP-dependent dehydrogenation of L-aspartate to iminoaspartate. The sequence is that of L-aspartate dehydrogenase 1 from Bordetella pertussis (strain Tohama I / ATCC BAA-589 / NCTC 13251).